A 147-amino-acid chain; its full sequence is ATP synthase epsilon chain (147 aa).

This sequence belongs to the ATPase epsilon chain family. F-type ATPases have 2 components, CF(1) - the catalytic core - and CF(0) - the membrane proton channel. CF(1) has five subunits: alpha(3), beta(3), gamma(1), delta(1), epsilon(1). CF(0) has three main subunits: a, b and c.

It localises to the cell inner membrane. Functionally, produces ATP from ADP in the presence of a proton gradient across the membrane. This is ATP synthase epsilon chain from Protochlamydia amoebophila (strain UWE25).